A 364-amino-acid polypeptide reads, in one-letter code: Developmentally-regulated GTP-binding protein 2 homolog (364 aa).

In terms of domain architecture, OBG-type G spans Ala63–Asn288. Residues Gly69–Ser76, Asp115–Ile119, and Asn246–Asp249 contribute to the GTP site. Positions Asn288–Lys363 constitute a TGS domain.

It belongs to the TRAFAC class OBG-HflX-like GTPase superfamily. OBG GTPase family.

The protein is Developmentally-regulated GTP-binding protein 2 homolog (drg2) of Dictyostelium discoideum (Social amoeba).